Consider the following 837-residue polypeptide: Enterin neuropeptides (837 aa).

The first 25 residues, 1–25 (MAKHDVTVMTLLLVVCALHVFDAQG), serve as a signal peptide directing secretion. A propeptide spanning residues 26–47 (TDVKLNDGFLRSGIMNIPFQRR) is cleaved from the precursor. Valine amide is present on Val57. A propeptide spanning residues 61 to 134 (SGFQSPVSPS…ENKRFSKENE (74 aa)) is cleaved from the precursor. A Valine amide modification is found at Val146. The propeptide occupies 150 to 178 (MDLSALEKELIAKLKAADLLSPLETEAPG). A Leucine amide modification is found at Leu190. A propeptide spanning residues 194–201 (MPVDVFPR) is cleaved from the precursor. Val211 bears the Valine amide mark. A propeptide spanning residues 215–234 (SGNGENYFDDLDTFGDISQR) is cleaved from the precursor. The residue at position 244 (Val244) is a Valine amide. Residues 248–266 (GNTDFSRNPLARLSQVQNR) constitute a propeptide that is removed on maturation. Val276 bears the Valine amide mark. Positions 280 to 285 (SVHNIV) are excised as a propeptide. Position 297 is a valine amide (Val297). Residues 301–325 (DFEDASEGLDEEEGDIDGYSDDLDV) constitute a propeptide that is removed on maturation. Valine amide occurs at positions 336, 348, 360, 372, 384, 396, 408, 420, 432, 444, 456, 468, 480, 492, 504, 516, 528, and 540. Residues 544–595 (ELGEDEINFLKEVDAADISRQLAEEDEKEAMVSVDDKETLSNEEDASEDDFE) constitute a propeptide that is removed on maturation. The tract at residues 567–594 (EEDEKEAMVSVDDKETLSNEEDASEDDF) is disordered. Acidic residues predominate over residues 584–593 (SNEEDASEDD). Position 598 is a pyrrolidone carboxylic acid (Glu); in form ENl' (Glu598). Val606 is subject to Valine amide. Residues 610–627 (DEEGDMGVEMEEEMESEK) constitute a propeptide that is removed on maturation. The residue at position 637 (Leu637) is a Leucine amide. At Gln641 the chain carries Pyrrolidone carboxylic acid. Valine amide is present on Val649. At Gln653 the chain carries Pyrrolidone carboxylic acid. 2 positions are modified to valine amide: Val661 and Val673. Gln677 is subject to Pyrrolidone carboxylic acid. 2 positions are modified to valine amide: Val685 and Val697. Pyrrolidone carboxylic acid is present on Gln701. Val709 is modified (valine amide). Residue Gln713 is modified to Pyrrolidone carboxylic acid. Val721 is subject to Valine amide. Gln725 carries the post-translational modification Pyrrolidone carboxylic acid. A Valine amide modification is found at Val733. Positions 734-837 (GKRSGAEDID…DSHIMATSST (104 aa)) are excised as a propeptide. A disordered region spans residues 772-837 (GQPAAANEEE…DSHIMATSST (66 aa)). A compositionally biased stretch (acidic residues) spans 778 to 791 (NEEELQQEAAEESE).

High expression in gut and CNS.

The protein localises to the secreted. Reduce interneurons B4/5 activity. May play a regulatory role in nonfeeding behaviors. This is Enterin neuropeptides (ENPP) from Aplysia californica (California sea hare).